The primary structure comprises 469 residues: MIPRIMSTQHPDNYSIPFFASSPILGGEDEITEAFYAFSVLGADEQMWDFEGKEVDEFVVKKLLERYPTFFKENILGEDLRLTPRVPNPSVEKAEAKLLLETLQGITRAADYARVFYLDNIAPIFEVILPMTTSLAEMLRVHELYRKIVSLSGEVIYDVTVKEWIGEFYPKEINVIPLFETKVALLKSGRIIREYIGRKRPEYLRVFFARSDPAMNYGLLSAVTYVKKALEQVGEVEEETSTPIYPIIGVGSPPFRGGMRPENVKKVLKEYPSVQTYTIQSSFKYDHPTKDVVKAVEIVKSKKREAPDPLDIPEFIQLYEIEYQKQLKILAPYIRNIVTRIPDRRKRKLHIGLFGYSRNVGGLSLPRVIKFTASLYSIGLPPELLGLNELSDNQLDSISEYYKNLYDDLEFAMRFFSFKVAERVGLRELSEKVKEFKPDIDDEYVREAELVFRGQGDVMKLAQIRGFLG.

This sequence belongs to the PEPCase type 2 family. In terms of assembly, homotetramer. Mg(2+) serves as cofactor.

It carries out the reaction oxaloacetate + phosphate = phosphoenolpyruvate + hydrogencarbonate. Its function is as follows. Catalyzes the irreversible beta-carboxylation of phosphoenolpyruvate (PEP) to form oxaloacetate (OAA), a four-carbon dicarboxylic acid source for the tricarboxylic acid cycle. The polypeptide is Phosphoenolpyruvate carboxylase (Pyrococcus horikoshii (strain ATCC 700860 / DSM 12428 / JCM 9974 / NBRC 100139 / OT-3)).